The primary structure comprises 689 residues: Glycine--tRNA ligase beta subunit (689 aa).

It belongs to the class-II aminoacyl-tRNA synthetase family. Tetramer of two alpha and two beta subunits.

It localises to the cytoplasm. The enzyme catalyses tRNA(Gly) + glycine + ATP = glycyl-tRNA(Gly) + AMP + diphosphate. This is Glycine--tRNA ligase beta subunit from Shewanella baltica (strain OS155 / ATCC BAA-1091).